The chain runs to 170 residues: Cathelicidin antimicrobial peptide (170 aa).

Positions 1-30 (MKTQRDGHSLGRWSLVLLLLGLVMPLAIVA) are cleaved as a signal peptide. Residues 31–131 (QVLSYKEAVL…DISCDKDNKR (101 aa)) constitute a propeptide, cathelin-like domain (CLD). Intrachain disulfides connect Cys86–Cys97 and Cys108–Cys125. Positions 150-162 (FKRIVQRIKDFLR) are active core.

It belongs to the cathelicidin family. In terms of assembly, monomer, homodimer or homotrimer (in vitro). Oligomerizes as tetra- or hexamer in solution (in vitro). In terms of processing, proteolytically cleaved by proteinase PRTN3 into antibacterial peptide LL-37. Proteolytically cleaved by cathepsin CTSG and neutrophil elastase ELANE. Post-translationally, resistant to proteolytic degradation in solution, and when bound to both zwitterionic (mimicking mammalian membranes) and negatively charged membranes (mimicking bacterial membranes). After secretion onto the skin surface, the CAMP gene product is processed by a serine protease-dependent mechanism into multiple novel antimicrobial peptides distinct from and shorter than cathelicidin LL-37. These peptides show enhanced antimicrobial action, acquiring the ability to kill skin pathogens such as S.aureus, E.coli and C.albicans. These peptides have lost the ability to stimulate CXCL8/IL8 release from keratinocytes. The peptides act synergistically, killing bacteria at lower concentrations when present together, and maintain activity at increased salt condition.

Its subcellular location is the secreted. The protein resides in the vesicle. Its function is as follows. Antimicrobial protein that is an integral component of the innate immune system. Binds to bacterial lipopolysaccharides (LPS). Acts via neutrophil N-formyl peptide receptors to enhance the release of CXCL2. Postsecretory processing generates multiple cathelicidin antimicrobial peptides with various lengths which act as a topical antimicrobial defense in sweat on skin. The unprocessed precursor form, cathelicidin antimicrobial peptide, inhibits the growth of Gram-negative E.coli and E.aerogenes with efficiencies comparable to that of the mature peptide LL-37 (in vitro). Antimicrobial peptide that is an integral component of the innate immune system. Binds to bacterial lipopolysaccharides (LPS). Causes membrane permeabilization by forming transmembrane pores (in vitro). Causes lysis of E.coli. Exhibits antimicrobial activity against Gram-negative bacteria such as P.aeruginosa, S.typhimurium, E.aerogenes, E.coli and P.syringae, Gram-positive bacteria such as L.monocytogenes, S.epidermidis, S.pyogenes and S.aureus, as well as vancomycin-resistant enterococci (in vitro). Exhibits antimicrobial activity against methicillin-resistant S.aureus, P.mirabilis, and C.albicans in low-salt media, but not in media containing 100 mM NaCl (in vitro). Forms chiral supramolecular assemblies with quinolone signal (PQS) molecules of P.aeruginosa, which may lead to interference of bacterial quorum signaling and perturbance of bacterial biofilm formation. May form supramolecular fiber-like assemblies on bacterial membranes. Induces cytokine and chemokine producation as well as TNF/TNFA and CSF2/GMCSF production in normal human keratinocytes. Exhibits hemolytic activity against red blood cells. Functionally, exhibits antimicrobial activity against E.coli and B.megaterium (in vitro). The protein is Cathelicidin antimicrobial peptide of Pan troglodytes (Chimpanzee).